The chain runs to 334 residues: Transaldolase (334 aa).

At serine 2 the chain carries N-acetylserine. The Schiff-base intermediate with substrate role is filled by lysine 143.

Belongs to the transaldolase family. Type 1 subfamily. Homodimer.

It carries out the reaction D-sedoheptulose 7-phosphate + D-glyceraldehyde 3-phosphate = D-erythrose 4-phosphate + beta-D-fructose 6-phosphate. It participates in carbohydrate degradation; pentose phosphate pathway; D-glyceraldehyde 3-phosphate and beta-D-fructose 6-phosphate from D-ribose 5-phosphate and D-xylulose 5-phosphate (non-oxidative stage): step 2/3. In terms of biological role, transaldolase is important for the balance of metabolites in the pentose-phosphate pathway. The chain is Transaldolase (TAL1) from Kluyveromyces lactis (strain ATCC 8585 / CBS 2359 / DSM 70799 / NBRC 1267 / NRRL Y-1140 / WM37) (Yeast).